The primary structure comprises 256 residues: Thiazole synthase (256 aa).

Lys-95 serves as the catalytic Schiff-base intermediate with DXP. Residues Gly-156, 182 to 183 (AG), and 204 to 205 (NT) contribute to the 1-deoxy-D-xylulose 5-phosphate site.

Belongs to the ThiG family. In terms of assembly, homotetramer. Forms heterodimers with either ThiH or ThiS.

Its subcellular location is the cytoplasm. The catalysed reaction is [ThiS sulfur-carrier protein]-C-terminal-Gly-aminoethanethioate + 2-iminoacetate + 1-deoxy-D-xylulose 5-phosphate = [ThiS sulfur-carrier protein]-C-terminal Gly-Gly + 2-[(2R,5Z)-2-carboxy-4-methylthiazol-5(2H)-ylidene]ethyl phosphate + 2 H2O + H(+). Its pathway is cofactor biosynthesis; thiamine diphosphate biosynthesis. Catalyzes the rearrangement of 1-deoxy-D-xylulose 5-phosphate (DXP) to produce the thiazole phosphate moiety of thiamine. Sulfur is provided by the thiocarboxylate moiety of the carrier protein ThiS. In vitro, sulfur can be provided by H(2)S. The chain is Thiazole synthase from Salmonella schwarzengrund (strain CVM19633).